Consider the following 196-residue polypeptide: Probable GTP-binding protein EngB (196 aa).

The EngB-type G domain maps to Asn-22–Lys-196. Residues Gly-30 to Ser-37, Gly-57 to Thr-61, Asp-75 to Gly-78, Thr-142 to Asp-145, and Phe-175 to Ser-177 contribute to the GTP site. Positions 37 and 59 each coordinate Mg(2+).

It belongs to the TRAFAC class TrmE-Era-EngA-EngB-Septin-like GTPase superfamily. EngB GTPase family. The cofactor is Mg(2+).

Functionally, necessary for normal cell division and for the maintenance of normal septation. The sequence is that of Probable GTP-binding protein EngB from Lactobacillus helveticus (strain DPC 4571).